The primary structure comprises 367 residues: Peptide chain release factor 1 (367 aa).

Residue glutamine 238 is modified to N5-methylglutamine.

The protein belongs to the prokaryotic/mitochondrial release factor family. Post-translationally, methylated by PrmC. Methylation increases the termination efficiency of RF1.

It is found in the cytoplasm. Functionally, peptide chain release factor 1 directs the termination of translation in response to the peptide chain termination codons UAG and UAA. The chain is Peptide chain release factor 1 from Dictyoglomus turgidum (strain DSM 6724 / Z-1310).